The sequence spans 308 residues: Maspardin (308 aa).

Residues 87-159 (FCDGFRKLLD…NSFWLMPAFM (73 aa)) form the AB hydrolase-1 domain. Ser-304 carries the post-translational modification Phosphoserine.

This sequence belongs to the AB hydrolase superfamily. As to quaternary structure, interacts with CD4. Interacts with ALDH16A1.

The protein resides in the cytoplasm. May play a role as a negative regulatory factor in CD4-dependent T-cell activation. This chain is Maspardin (SPG21), found in Pongo abelii (Sumatran orangutan).